Consider the following 208-residue polypeptide: Uracil phosphoribosyltransferase (208 aa).

5-phospho-alpha-D-ribose 1-diphosphate is bound by residues arginine 78, arginine 103, and 130-138 (DPMLATGGS). Residues isoleucine 193 and 198–200 (GDA) each bind uracil. 5-phospho-alpha-D-ribose 1-diphosphate is bound at residue aspartate 199.

It belongs to the UPRTase family. Mg(2+) serves as cofactor.

The catalysed reaction is UMP + diphosphate = 5-phospho-alpha-D-ribose 1-diphosphate + uracil. Its pathway is pyrimidine metabolism; UMP biosynthesis via salvage pathway; UMP from uracil: step 1/1. With respect to regulation, allosterically activated by GTP. Catalyzes the conversion of uracil and 5-phospho-alpha-D-ribose 1-diphosphate (PRPP) to UMP and diphosphate. This chain is Uracil phosphoribosyltransferase, found in Klebsiella pneumoniae subsp. pneumoniae (strain ATCC 700721 / MGH 78578).